The chain runs to 404 residues: Alanyl-tRNA editing protein AlaX-L (404 aa).

Zn(2+) is bound by residues H104, H108, C202, and H206.

It belongs to the class-II aminoacyl-tRNA synthetase family. Editing domain AlaX-L subfamily. Requires Zn(2+) as cofactor.

The protein resides in the cytoplasm. Functionally, functions in trans to edit the amino acid moiety from mischarged charged tRNA(Ala). In Pyrococcus horikoshii (strain ATCC 700860 / DSM 12428 / JCM 9974 / NBRC 100139 / OT-3), this protein is Alanyl-tRNA editing protein AlaX-L (alaXL).